A 394-amino-acid polypeptide reads, in one-letter code: Phosphopentomutase (394 aa).

Residues Asp10, Asp282, His287, Asp323, His324, and His335 each coordinate Mn(2+).

It belongs to the phosphopentomutase family. Mn(2+) is required as a cofactor.

Its subcellular location is the cytoplasm. It carries out the reaction 2-deoxy-alpha-D-ribose 1-phosphate = 2-deoxy-D-ribose 5-phosphate. The enzyme catalyses alpha-D-ribose 1-phosphate = D-ribose 5-phosphate. It participates in carbohydrate degradation; 2-deoxy-D-ribose 1-phosphate degradation; D-glyceraldehyde 3-phosphate and acetaldehyde from 2-deoxy-alpha-D-ribose 1-phosphate: step 1/2. Its function is as follows. Isomerase that catalyzes the conversion of deoxy-ribose 1-phosphate (dRib-1-P) and ribose 1-phosphate (Rib-1-P) to deoxy-ribose 5-phosphate (dRib-5-P) and ribose 5-phosphate (Rib-5-P), respectively. This Dictyoglomus turgidum (strain DSM 6724 / Z-1310) protein is Phosphopentomutase.